A 308-amino-acid polypeptide reads, in one-letter code: 4-hydroxy-3-methylbut-2-enyl diphosphate reductase (308 aa).

Cysteine 12 provides a ligand contact to [4Fe-4S] cluster. (2E)-4-hydroxy-3-methylbut-2-enyl diphosphate contacts are provided by histidine 43 and histidine 77. Residues histidine 43 and histidine 77 each contribute to the dimethylallyl diphosphate site. Isopentenyl diphosphate is bound by residues histidine 43 and histidine 77. Residue cysteine 99 coordinates [4Fe-4S] cluster. Histidine 127 provides a ligand contact to (2E)-4-hydroxy-3-methylbut-2-enyl diphosphate. Residue histidine 127 coordinates dimethylallyl diphosphate. Histidine 127 contributes to the isopentenyl diphosphate binding site. The active-site Proton donor is glutamate 129. Position 167 (threonine 167) interacts with (2E)-4-hydroxy-3-methylbut-2-enyl diphosphate. Position 197 (cysteine 197) interacts with [4Fe-4S] cluster. Positions 225, 226, 227, and 269 each coordinate (2E)-4-hydroxy-3-methylbut-2-enyl diphosphate. The dimethylallyl diphosphate site is built by serine 225, serine 226, asparagine 227, and serine 269. Isopentenyl diphosphate is bound by residues serine 225, serine 226, asparagine 227, and serine 269.

It belongs to the IspH family. It depends on [4Fe-4S] cluster as a cofactor.

It carries out the reaction isopentenyl diphosphate + 2 oxidized [2Fe-2S]-[ferredoxin] + H2O = (2E)-4-hydroxy-3-methylbut-2-enyl diphosphate + 2 reduced [2Fe-2S]-[ferredoxin] + 2 H(+). It catalyses the reaction dimethylallyl diphosphate + 2 oxidized [2Fe-2S]-[ferredoxin] + H2O = (2E)-4-hydroxy-3-methylbut-2-enyl diphosphate + 2 reduced [2Fe-2S]-[ferredoxin] + 2 H(+). It functions in the pathway isoprenoid biosynthesis; dimethylallyl diphosphate biosynthesis; dimethylallyl diphosphate from (2E)-4-hydroxy-3-methylbutenyl diphosphate: step 1/1. The protein operates within isoprenoid biosynthesis; isopentenyl diphosphate biosynthesis via DXP pathway; isopentenyl diphosphate from 1-deoxy-D-xylulose 5-phosphate: step 6/6. Catalyzes the conversion of 1-hydroxy-2-methyl-2-(E)-butenyl 4-diphosphate (HMBPP) into a mixture of isopentenyl diphosphate (IPP) and dimethylallyl diphosphate (DMAPP). Acts in the terminal step of the DOXP/MEP pathway for isoprenoid precursor biosynthesis. The protein is 4-hydroxy-3-methylbut-2-enyl diphosphate reductase of Wolbachia pipientis subsp. Culex pipiens (strain wPip).